We begin with the raw amino-acid sequence, 183 residues long: Microfibrillar-associated protein 2 (183 aa).

The first 17 residues, M1–A17, serve as a signal peptide directing secretion. At Q18 the chain carries Pyrrolidone carboxylic acid. Q20 is covalently cross-linked (Isoglutamyl lysine isopeptide (Gln-Lys) (interchain with K-?)). Y47, Y48, and Y50 each carry sulfotyrosine. The ShKT domain occupies C153 to C183. 3 disulfide bridges follow: C153–C183, C160–C176, and C169–C180.

Belongs to the MFAP family. Forms a ternary complex with BGN and ELN. Interacts with FBN1 (via N-terminal domain) and FBN2. Post-translationally, O-glycosylated; glycans consist of Gal(beta1-3)GalNAc. In terms of processing, forms intermolecular disulfide bonds either with other MAGP-1 molecules or with other components of the microfibrils. Forms transglutaminase cross-links with tropoelastin.

The protein resides in the secreted. It localises to the extracellular space. It is found in the extracellular matrix. Functionally, component of the elastin-associated microfibrils. This chain is Microfibrillar-associated protein 2 (MFAP2), found in Bos taurus (Bovine).